A 249-amino-acid polypeptide reads, in one-letter code: uncharacterized protein (249 aa).

A helical transmembrane segment spans residues 3-23 (WYWIGLLIVVVLFLLSAVRIV).

It belongs to the band 7/mec-2 family.

It is found in the membrane. This is an uncharacterized protein from Archaeoglobus fulgidus (strain ATCC 49558 / DSM 4304 / JCM 9628 / NBRC 100126 / VC-16).